Reading from the N-terminus, the 315-residue chain is 4-hydroxy-3-methylbut-2-enyl diphosphate reductase (315 aa).

C12 contributes to the [4Fe-4S] cluster binding site. (2E)-4-hydroxy-3-methylbut-2-enyl diphosphate-binding residues include H43 and H81. Positions 43 and 81 each coordinate dimethylallyl diphosphate. Residues H43 and H81 each contribute to the isopentenyl diphosphate site. C103 contacts [4Fe-4S] cluster. H131 is a binding site for (2E)-4-hydroxy-3-methylbut-2-enyl diphosphate. H131 is a binding site for dimethylallyl diphosphate. Position 131 (H131) interacts with isopentenyl diphosphate. The Proton donor role is filled by E133. Position 170 (T170) interacts with (2E)-4-hydroxy-3-methylbut-2-enyl diphosphate. C198 lines the [4Fe-4S] cluster pocket. Residues S226, N228, and S271 each coordinate (2E)-4-hydroxy-3-methylbut-2-enyl diphosphate. Residues S226, N228, and S271 each contribute to the dimethylallyl diphosphate site. Residues S226, N228, and S271 each coordinate isopentenyl diphosphate.

It belongs to the IspH family. Requires [4Fe-4S] cluster as cofactor.

It carries out the reaction isopentenyl diphosphate + 2 oxidized [2Fe-2S]-[ferredoxin] + H2O = (2E)-4-hydroxy-3-methylbut-2-enyl diphosphate + 2 reduced [2Fe-2S]-[ferredoxin] + 2 H(+). It catalyses the reaction dimethylallyl diphosphate + 2 oxidized [2Fe-2S]-[ferredoxin] + H2O = (2E)-4-hydroxy-3-methylbut-2-enyl diphosphate + 2 reduced [2Fe-2S]-[ferredoxin] + 2 H(+). The protein operates within isoprenoid biosynthesis; dimethylallyl diphosphate biosynthesis; dimethylallyl diphosphate from (2E)-4-hydroxy-3-methylbutenyl diphosphate: step 1/1. Its pathway is isoprenoid biosynthesis; isopentenyl diphosphate biosynthesis via DXP pathway; isopentenyl diphosphate from 1-deoxy-D-xylulose 5-phosphate: step 6/6. Catalyzes the conversion of 1-hydroxy-2-methyl-2-(E)-butenyl 4-diphosphate (HMBPP) into a mixture of isopentenyl diphosphate (IPP) and dimethylallyl diphosphate (DMAPP). Acts in the terminal step of the DOXP/MEP pathway for isoprenoid precursor biosynthesis. The protein is 4-hydroxy-3-methylbut-2-enyl diphosphate reductase of Bacillus cytotoxicus (strain DSM 22905 / CIP 110041 / 391-98 / NVH 391-98).